Reading from the N-terminus, the 347-residue chain is D-alanine--D-alanine ligase (347 aa).

The region spanning lysine 131 to glutamate 333 is the ATP-grasp domain. Glutamate 161 to glutamate 216 is an ATP binding site. Aspartate 287, glutamate 300, and asparagine 302 together coordinate Mg(2+).

This sequence belongs to the D-alanine--D-alanine ligase family. Requires Mg(2+) as cofactor. It depends on Mn(2+) as a cofactor.

The protein localises to the cytoplasm. It catalyses the reaction 2 D-alanine + ATP = D-alanyl-D-alanine + ADP + phosphate + H(+). Its pathway is cell wall biogenesis; peptidoglycan biosynthesis. In terms of biological role, cell wall formation. The protein is D-alanine--D-alanine ligase of Streptococcus pneumoniae (strain Hungary19A-6).